A 410-amino-acid chain; its full sequence is Porin-like protein GalP (410 aa).

The N-terminal stretch at 1 to 25 (MKCRTLYPLVPTFALAASLPLQALA) is a signal peptide.

The protein belongs to the outer membrane porin (Opr) (TC 1.B.25) family.

In terms of biological role, probable transporter, possibly involved in the gallate degradation pathway. May play a role in the uptake of low gallate concentrations that may exist in the natural habitats of P.putida. The sequence is that of Porin-like protein GalP (galP) from Pseudomonas putida (strain ATCC 47054 / DSM 6125 / CFBP 8728 / NCIMB 11950 / KT2440).